The sequence spans 675 residues: tRNA 5-methylaminomethyl-2-thiouridine biosynthesis bifunctional protein MnmC (675 aa).

The interval 1-245 is tRNA (mnm(5)s(2)U34)-methyltransferase; it reads MANLPIQHAS…KREMLSGLLP (245 aa). Residues 271–675 are FAD-dependent cmnm(5)s(2)U34 oxidoreductase; that stretch reads IGGGIASVLT…LLKGKPVTHD (405 aa).

It in the N-terminal section; belongs to the methyltransferase superfamily. tRNA (mnm(5)s(2)U34)-methyltransferase family. This sequence in the C-terminal section; belongs to the DAO family. FAD is required as a cofactor.

The protein resides in the cytoplasm. It catalyses the reaction 5-aminomethyl-2-thiouridine(34) in tRNA + S-adenosyl-L-methionine = 5-methylaminomethyl-2-thiouridine(34) in tRNA + S-adenosyl-L-homocysteine + H(+). Catalyzes the last two steps in the biosynthesis of 5-methylaminomethyl-2-thiouridine (mnm(5)s(2)U) at the wobble position (U34) in tRNA. Catalyzes the FAD-dependent demodification of cmnm(5)s(2)U34 to nm(5)s(2)U34, followed by the transfer of a methyl group from S-adenosyl-L-methionine to nm(5)s(2)U34, to form mnm(5)s(2)U34. The chain is tRNA 5-methylaminomethyl-2-thiouridine biosynthesis bifunctional protein MnmC from Pectobacterium atrosepticum (strain SCRI 1043 / ATCC BAA-672) (Erwinia carotovora subsp. atroseptica).